Consider the following 588-residue polypeptide: 3-methylmercaptopropionyl-CoA dehydrogenase (588 aa).

The active-site Proton acceptor is the Glu-435.

Belongs to the acyl-CoA dehydrogenase family. Requires FAD as cofactor.

The enzyme catalyses 3-(methylsulfanyl)propanoyl-CoA + oxidized [electron-transfer flavoprotein] + H(+) = 3-(methylsulfanyl)acryloyl-CoA + reduced [electron-transfer flavoprotein]. Its function is as follows. Involved in the assimilation of dimethylsulphoniopropionate (DMSP), an important compound in the fixation of carbon in marine phytoplankton, by mediating the conversion of 3-(methylthio)propanoyl-CoA (MMPA-CoA) to 3-(methylthio)acryloyl-CoA (MTA-CoA). This chain is 3-methylmercaptopropionyl-CoA dehydrogenase, found in Ruegeria pomeroyi (strain ATCC 700808 / DSM 15171 / DSS-3) (Silicibacter pomeroyi).